The following is a 398-amino-acid chain: NADH-quinone oxidoreductase subunit D (398 aa).

This sequence belongs to the complex I 49 kDa subunit family. In terms of assembly, NDH-1 is composed of 14 different subunits. Subunits NuoB, C, D, E, F, and G constitute the peripheral sector of the complex.

Its subcellular location is the cell inner membrane. The enzyme catalyses a quinone + NADH + 5 H(+)(in) = a quinol + NAD(+) + 4 H(+)(out). In terms of biological role, NDH-1 shuttles electrons from NADH, via FMN and iron-sulfur (Fe-S) centers, to quinones in the respiratory chain. The immediate electron acceptor for the enzyme in this species is believed to be ubiquinone. Couples the redox reaction to proton translocation (for every two electrons transferred, four hydrogen ions are translocated across the cytoplasmic membrane), and thus conserves the redox energy in a proton gradient. The polypeptide is NADH-quinone oxidoreductase subunit D (Bradyrhizobium diazoefficiens (strain JCM 10833 / BCRC 13528 / IAM 13628 / NBRC 14792 / USDA 110)).